The following is a 612-amino-acid chain: Chloride intracellular channel protein 6 (612 aa).

The disordered stretch occupies residues 1-373; sequence MAEATEPKEV…NGPASEEGDL (373 aa). A compositionally biased stretch (basic and acidic residues) spans 34 to 51; the sequence is LEGREASEGAAEAPRDLG. S40 carries the phosphoserine modification. Low complexity predominate over residues 84–96; the sequence is PGTETPGTSGAPG. The span at 120-129 shows a compositional bias: polar residues; the sequence is QQVQGTSSGL. Positions 140-153 are enriched in basic and acidic residues; sequence EDARREPEDPKASE. Low complexity predominate over residues 208-223; the sequence is SSPQPQDEAIEIAAAE. 2 stretches are compositionally biased toward basic and acidic residues: residues 240 to 264 and 275 to 303; these read AKGE…RVDS and EEAR…RPES. A phosphoserine mark is found at S264, S303, and S321. 2 stretches are compositionally biased toward basic and acidic residues: residues 325–335 and 354–364; these read EEAKSTGHEES and ELGRVNGRREN. Residue S368 is modified to Phosphoserine. Positions 395–398 match the G-site motif; sequence CPFS. Residues 397–417 traverse the membrane as a helical segment; the sequence is FSQRLFMILWLKGVIFNVTTV. In terms of domain architecture, GST C-terminal spans 441–612; it reads DGEVKTDVNK…AYSDAAKRMK (172 aa).

Belongs to the chloride channel CLIC family. As to quaternary structure, monomer (soluble state). Interacts with dopamine receptors DRD2, DRD3 and DRD4. In terms of processing, phosphorylated. Predominantly expressed in brain, pituitary and stomach. In adult brain, it is restricted to the choroid plexus, the striatal proliferative subventricular zone and the cerebellum where it colocalizes with the D(3)R in the Purkinje cells of the lobules IX and X.

The protein resides in the cytoplasm. It is found in the cell membrane. It catalyses the reaction chloride(in) = chloride(out). With respect to regulation, channel activity is redox- and pH-regulated. Inhibited by IAA-94. In terms of biological role, in the soluble state, catalyzes glutaredoxin-like thiol disulfide exchange reactions with reduced glutathione as electron donor. Can insert into membranes and form voltage-dependent chloride-selective channels. The channel opens upon membrane depolarization at positive voltages and closes at negative membrane voltages. May play a critical role in water-secreting cells, possibly through the regulation of chloride ion transport. This is Chloride intracellular channel protein 6 (Clic6) from Rattus norvegicus (Rat).